Reading from the N-terminus, the 245-residue chain is MASLGVNIDHIANVREARKTFEPDPVKMVLLAELGGADGITVHLREDRRHIQDRDLNLLKETVHTRLNLEMAATEEMTSIALNLKPDMVTLVPEKREEVTTEGGLDVIKNKNKLKEIIQRLSGEDIPVSLFVDPVQAQLENCAEVKAAWIELHTGKYAITKNKARDLELSILKENTAKAKSYGLRVNAGHGLTYQNVEPIAAIEGIEELNIGHTIISRALSVGLSQAVKEMKSLIINPRKDNFLL.

Position 7 (asparagine 7) interacts with 3-amino-2-oxopropyl phosphate. 9–10 (DH) lines the 1-deoxy-D-xylulose 5-phosphate pocket. A 3-amino-2-oxopropyl phosphate-binding site is contributed by arginine 18. Histidine 43 acts as the Proton acceptor in catalysis. 1-deoxy-D-xylulose 5-phosphate is bound by residues arginine 45 and histidine 50. Glutamate 70 (proton acceptor) is an active-site residue. Threonine 100 serves as a coordination point for 1-deoxy-D-xylulose 5-phosphate. Histidine 190 functions as the Proton donor in the catalytic mechanism. 3-amino-2-oxopropyl phosphate-binding positions include glycine 191 and 212 to 213 (GH).

It belongs to the PNP synthase family. Homooctamer; tetramer of dimers.

It is found in the cytoplasm. It carries out the reaction 3-amino-2-oxopropyl phosphate + 1-deoxy-D-xylulose 5-phosphate = pyridoxine 5'-phosphate + phosphate + 2 H2O + H(+). Its pathway is cofactor biosynthesis; pyridoxine 5'-phosphate biosynthesis; pyridoxine 5'-phosphate from D-erythrose 4-phosphate: step 5/5. In terms of biological role, catalyzes the complicated ring closure reaction between the two acyclic compounds 1-deoxy-D-xylulose-5-phosphate (DXP) and 3-amino-2-oxopropyl phosphate (1-amino-acetone-3-phosphate or AAP) to form pyridoxine 5'-phosphate (PNP) and inorganic phosphate. This chain is Pyridoxine 5'-phosphate synthase, found in Prochlorococcus marinus (strain NATL1A).